The sequence spans 356 residues: Peptide chain release factor 1 (356 aa).

At Gln233 the chain carries N5-methylglutamine.

It belongs to the prokaryotic/mitochondrial release factor family. Methylated by PrmC. Methylation increases the termination efficiency of RF1.

The protein resides in the cytoplasm. Its function is as follows. Peptide chain release factor 1 directs the termination of translation in response to the peptide chain termination codons UAG and UAA. This chain is Peptide chain release factor 1, found in Shouchella clausii (strain KSM-K16) (Alkalihalobacillus clausii).